Reading from the N-terminus, the 288-residue chain is UDP-3-O-acyl-N-acetylglucosamine deacetylase (288 aa).

Zn(2+)-binding residues include histidine 79, histidine 236, and aspartate 240. The active-site Proton donor is the histidine 263.

Belongs to the LpxC family. The cofactor is Zn(2+).

It carries out the reaction a UDP-3-O-[(3R)-3-hydroxyacyl]-N-acetyl-alpha-D-glucosamine + H2O = a UDP-3-O-[(3R)-3-hydroxyacyl]-alpha-D-glucosamine + acetate. The protein operates within glycolipid biosynthesis; lipid IV(A) biosynthesis; lipid IV(A) from (3R)-3-hydroxytetradecanoyl-[acyl-carrier-protein] and UDP-N-acetyl-alpha-D-glucosamine: step 2/6. Functionally, catalyzes the hydrolysis of UDP-3-O-myristoyl-N-acetylglucosamine to form UDP-3-O-myristoylglucosamine and acetate, the committed step in lipid A biosynthesis. The polypeptide is UDP-3-O-acyl-N-acetylglucosamine deacetylase (Rickettsia felis (strain ATCC VR-1525 / URRWXCal2) (Rickettsia azadi)).